The following is a 367-amino-acid chain: Flagellar P-ring protein (367 aa).

An N-terminal signal peptide occupies residues 1–21 (MYVFKALAGIVLALVATLAHA).

Belongs to the FlgI family. In terms of assembly, the basal body constitutes a major portion of the flagellar organelle and consists of four rings (L,P,S, and M) mounted on a central rod.

It localises to the periplasm. The protein resides in the bacterial flagellum basal body. Functionally, assembles around the rod to form the L-ring and probably protects the motor/basal body from shearing forces during rotation. The polypeptide is Flagellar P-ring protein (Salmonella paratyphi C (strain RKS4594)).